We begin with the raw amino-acid sequence, 716 residues long: Polyribonucleotide nucleotidyltransferase (716 aa).

Mg(2+)-binding residues include Asp495 and Asp501. One can recognise a KH domain in the interval 562 to 621 (PRLFRIQINPEQIGLVIGPGGKTIRSITEQTGAKIDIEDTGAVTISAVDADSALRAKSII). An S1 motif domain is found at 631-699 (GDVYIGKVTR…QKGRVNLTRK (69 aa)).

Belongs to the polyribonucleotide nucleotidyltransferase family. Requires Mg(2+) as cofactor.

The protein localises to the cytoplasm. It catalyses the reaction RNA(n+1) + phosphate = RNA(n) + a ribonucleoside 5'-diphosphate. Functionally, involved in mRNA degradation. Catalyzes the phosphorolysis of single-stranded polyribonucleotides processively in the 3'- to 5'-direction. The protein is Polyribonucleotide nucleotidyltransferase of Synechococcus elongatus (strain ATCC 33912 / PCC 7942 / FACHB-805) (Anacystis nidulans R2).